Here is a 129-residue protein sequence, read N- to C-terminus: MTYESKTGNVKRFVKALQQEFDVEAIEITDDTIINQEFIHITYTIGFGEVPERTLSFINKNKNKIRGVAVSGNKVWGDNYGLAGDKLSAKFHTPLLLKFELSGTKQDLQKIIQEVQLIDKHNTKLDQAQ.

It belongs to the NrdI family.

Functionally, probably involved in ribonucleotide reductase function. The sequence is that of SPbeta prophage-derived protein NrdI (nrdIB) from Bacillus subtilis (strain 168).